The following is a 216-amino-acid chain: Probable nicotinate-nucleotide adenylyltransferase (216 aa).

This sequence belongs to the NadD family.

It catalyses the reaction nicotinate beta-D-ribonucleotide + ATP + H(+) = deamido-NAD(+) + diphosphate. Its pathway is cofactor biosynthesis; NAD(+) biosynthesis; deamido-NAD(+) from nicotinate D-ribonucleotide: step 1/1. Catalyzes the reversible adenylation of nicotinate mononucleotide (NaMN) to nicotinic acid adenine dinucleotide (NaAD). The polypeptide is Probable nicotinate-nucleotide adenylyltransferase (Klebsiella pneumoniae subsp. pneumoniae (strain ATCC 700721 / MGH 78578)).